Here is an 881-residue protein sequence, read N- to C-terminus: EEF1AKMT4-ECE2 readthrough transcript protein (881 aa).

A methyltransferase-like region region spans residues 1 to 160; it reads MASPRTPVSP…VHTVDQVLSE (160 aa). The Cytoplasmic portion of the chain corresponds to 1-178; it reads MASPRTPVSP…QLFGSHTQLE (178 aa). S-adenosyl-L-methionine contacts are provided by W26 and Y30. Y39 is subject to Phosphotyrosine. S-adenosyl-L-methionine-binding positions include W41, G66, 88-89, 113-114, and K130; these read DY and DV. H174 carries the phosphoserine modification. The chain crosses the membrane as a helical; Signal-anchor for type II membrane protein span at residues 179–199; it reads LVLAGLILVLAALLLGCLVAL. The Lumenal segment spans residues 200-881; that stretch reads WVHRDPAHST…MNPGQLCEVW (682 aa). Residues 209-881 enclose the Peptidase M13 domain; that stretch reads TCVTEACIRV…MNPGQLCEVW (673 aa). 5 cysteine pairs are disulfide-bonded: C210-C215, C233-C866, C241-C826, C297-C546, and C755-C878. 7 N-linked (GlcNAc...) asparagine glycosylation sites follow: N277, N281, N322, N382, N427, N494, and N650. Position 718 (H718) interacts with Zn(2+). E719 is a catalytic residue. H722 contributes to the Zn(2+) binding site. N743 and N751 each carry an N-linked (GlcNAc...) asparagine glycan. E778 lines the Zn(2+) pocket. The active-site Proton donor is D782.

It in the N-terminal section; belongs to the methyltransferase superfamily. In the C-terminal section; belongs to the peptidase M13 family. Zn(2+) is required as a cofactor. Expressed at high levels in central nervous system. Expressed in adrenal glands, ovary and uterus, and at low levels in heart.

It is found in the golgi apparatus membrane. The protein resides in the cytoplasmic vesicle. It localises to the secretory vesicle membrane. The enzyme catalyses Hydrolysis of the 21-Trp-|-Val-22 bond in big endothelin to form endothelin 1.. Inhibited by phosphoramidon. Converts big endothelin-1 to endothelin-1. May also have methyltransferase activity. May play a role in amyloid-beta processing. The sequence is that of EEF1AKMT4-ECE2 readthrough transcript protein from Mus musculus (Mouse).